The chain runs to 609 residues: UvrABC system protein C (609 aa).

Residues 13 to 91 (HQPGVYRMFD…IKAFQPRYNV (79 aa)) form the GIY-YIG domain. A UVR domain is found at 201 to 236 (QQVLEHLIKKMEQASMQLNFEQAAYFRDQIQAIRAV).

It belongs to the UvrC family. In terms of assembly, interacts with UvrB in an incision complex.

The protein localises to the cytoplasm. Its function is as follows. The UvrABC repair system catalyzes the recognition and processing of DNA lesions. UvrC both incises the 5' and 3' sides of the lesion. The N-terminal half is responsible for the 3' incision and the C-terminal half is responsible for the 5' incision. The chain is UvrABC system protein C from Histophilus somni (strain 129Pt) (Haemophilus somnus).